Reading from the N-terminus, the 469-residue chain is MAQTLYDKLWNTHVVHTEDDGTALLYIDRQLLHEVTSPQAFEGLNVAHRPVWRISANLAVSDHNVPTTDRSHGIADPVSKLQVDTLDANCDAFGITQFKMNDVRQGIVHIIGPEQGATLPGMTIVCGDSHTSTHGAFGALAHGIGTSEVEHVLATQTLLQKKSKNMLVKVEGALPRGCTAKDIVLAIIGRIGTAGGTGYAIEFGGSTIRALTMEGRMTVCNMAIEAGARAGMVAVDDTTIDYLKGRPFVPTGAEWDQAVEYWREFKSDEGAQFDRVVELNAAEIVPQVTWGTSPEMVTSIDGRVPDPEREKDPVKRDAMERALAYMALEPNTPMESIKVDKIFIGSCTNARIEDIRAAAYVVKKLNRRIASNVRLAMVVPGSGLVKAQAEREGLDKVFTDAGFEWREPGCSMCLAMNADRLDPGERCASTSNRNFEGRQGAGGRTHLVSPAMAAAAAIEGHFVDIRQLG.

Residues C347, C410, and C413 each contribute to the [4Fe-4S] cluster site.

This sequence belongs to the aconitase/IPM isomerase family. LeuC type 1 subfamily. Heterodimer of LeuC and LeuD. Requires [4Fe-4S] cluster as cofactor.

It carries out the reaction (2R,3S)-3-isopropylmalate = (2S)-2-isopropylmalate. The protein operates within amino-acid biosynthesis; L-leucine biosynthesis; L-leucine from 3-methyl-2-oxobutanoate: step 2/4. In terms of biological role, catalyzes the isomerization between 2-isopropylmalate and 3-isopropylmalate, via the formation of 2-isopropylmaleate. This Burkholderia ambifaria (strain MC40-6) protein is 3-isopropylmalate dehydratase large subunit.